Reading from the N-terminus, the 876-residue chain is Phosphoenolpyruvate carboxylase (876 aa).

Catalysis depends on residues H138 and K544.

The protein belongs to the PEPCase type 1 family. It depends on Mg(2+) as a cofactor.

The enzyme catalyses oxaloacetate + phosphate = phosphoenolpyruvate + hydrogencarbonate. In terms of biological role, forms oxaloacetate, a four-carbon dicarboxylic acid source for the tricarboxylic acid cycle. The polypeptide is Phosphoenolpyruvate carboxylase (Marinomonas sp. (strain MWYL1)).